The sequence spans 104 residues: Zinc-containing ferredoxin-2 (104 aa).

The tract at residues glycine 2–threonine 37 is N-terminal extension. The Zn(2+) site is built by histidine 17, histidine 20, and histidine 35. 4Fe-4S ferredoxin-type domains follow at residues isoleucine 38–threonine 66 and lysine 75–proline 104. Positions 46 and 52 each coordinate [3Fe-4S] cluster. Cysteine 56 contacts [4Fe-4S] cluster. Zn(2+) is bound at residue aspartate 77. [4Fe-4S] cluster contacts are provided by cysteine 84, cysteine 87, and cysteine 90. Cysteine 94 is a [3Fe-4S] cluster binding site.

[3Fe-4S] cluster serves as cofactor. [4Fe-4S] cluster is required as a cofactor. The cofactor is Zn(2+).

Its function is as follows. Ferredoxins are iron-sulfur proteins that transfer electrons in a wide variety of metabolic reactions. The protein is Zinc-containing ferredoxin-2 (zfx2) of Sulfurisphaera tokodaii (strain DSM 16993 / JCM 10545 / NBRC 100140 / 7) (Sulfolobus tokodaii).